The sequence spans 448 residues: Exodeoxyribonuclease 7 large subunit (448 aa).

The protein belongs to the XseA family. In terms of assembly, heterooligomer composed of large and small subunits.

The protein resides in the cytoplasm. It catalyses the reaction Exonucleolytic cleavage in either 5'- to 3'- or 3'- to 5'-direction to yield nucleoside 5'-phosphates.. Bidirectionally degrades single-stranded DNA into large acid-insoluble oligonucleotides, which are then degraded further into small acid-soluble oligonucleotides. The polypeptide is Exodeoxyribonuclease 7 large subunit (Hamiltonella defensa subsp. Acyrthosiphon pisum (strain 5AT)).